We begin with the raw amino-acid sequence, 340 residues long: Glucokinase (340 aa).

17–22 (GDIGGT) is a binding site for ATP.

The protein belongs to the bacterial glucokinase family.

The protein resides in the cytoplasm. The catalysed reaction is D-glucose + ATP = D-glucose 6-phosphate + ADP + H(+). The protein is Glucokinase of Agrobacterium fabrum (strain C58 / ATCC 33970) (Agrobacterium tumefaciens (strain C58)).